We begin with the raw amino-acid sequence, 314 residues long: Methionyl-tRNA formyltransferase (314 aa).

110–113 (SLLP) provides a ligand contact to (6S)-5,6,7,8-tetrahydrofolate.

The protein belongs to the Fmt family.

It carries out the reaction L-methionyl-tRNA(fMet) + (6R)-10-formyltetrahydrofolate = N-formyl-L-methionyl-tRNA(fMet) + (6S)-5,6,7,8-tetrahydrofolate + H(+). Attaches a formyl group to the free amino group of methionyl-tRNA(fMet). The formyl group appears to play a dual role in the initiator identity of N-formylmethionyl-tRNA by promoting its recognition by IF2 and preventing the misappropriation of this tRNA by the elongation apparatus. The sequence is that of Methionyl-tRNA formyltransferase from Lactobacillus acidophilus (strain ATCC 700396 / NCK56 / N2 / NCFM).